A 131-amino-acid chain; its full sequence is MAEKVIYRGTGRRKTSVAQVILTPGKGNIIVNGVPALEFFPYPTLVQDLEQPLVATGTEKDFDITVTVKGGGFTGQAGATRLGIARALLVASEDYRKGLRAVGLLTRDARIKERKKYGLRGARRAPQYSKR.

The protein belongs to the universal ribosomal protein uS9 family.

The sequence is that of Small ribosomal subunit protein uS9 from Mesoplasma florum (strain ATCC 33453 / NBRC 100688 / NCTC 11704 / L1) (Acholeplasma florum).